The primary structure comprises 78 residues: Large ribosomal subunit protein bL28 (78 aa).

The protein belongs to the bacterial ribosomal protein bL28 family.

The polypeptide is Large ribosomal subunit protein bL28 (Clavibacter michiganensis subsp. michiganensis (strain NCPPB 382)).